The primary structure comprises 150 residues: SsrA-binding protein (150 aa).

Belongs to the SmpB family.

Its subcellular location is the cytoplasm. Its function is as follows. Required for rescue of stalled ribosomes mediated by trans-translation. Binds to transfer-messenger RNA (tmRNA), required for stable association of tmRNA with ribosomes. tmRNA and SmpB together mimic tRNA shape, replacing the anticodon stem-loop with SmpB. tmRNA is encoded by the ssrA gene; the 2 termini fold to resemble tRNA(Ala) and it encodes a 'tag peptide', a short internal open reading frame. During trans-translation Ala-aminoacylated tmRNA acts like a tRNA, entering the A-site of stalled ribosomes, displacing the stalled mRNA. The ribosome then switches to translate the ORF on the tmRNA; the nascent peptide is terminated with the 'tag peptide' encoded by the tmRNA and targeted for degradation. The ribosome is freed to recommence translation, which seems to be the essential function of trans-translation. The protein is SsrA-binding protein of Magnetococcus marinus (strain ATCC BAA-1437 / JCM 17883 / MC-1).